Here is a 436-residue protein sequence, read N- to C-terminus: 3-ketoacyl-CoA thiolase (436 aa).

The active-site Acyl-thioester intermediate is Cys99. Active-site proton acceptor residues include His392 and Cys422.

This sequence belongs to the thiolase-like superfamily. Thiolase family. Heterotetramer of two alpha chains (FadJ) and two beta chains (FadI).

Its subcellular location is the cytoplasm. It carries out the reaction an acyl-CoA + acetyl-CoA = a 3-oxoacyl-CoA + CoA. It functions in the pathway lipid metabolism; fatty acid beta-oxidation. Its function is as follows. Catalyzes the final step of fatty acid oxidation in which acetyl-CoA is released and the CoA ester of a fatty acid two carbons shorter is formed. The chain is 3-ketoacyl-CoA thiolase from Salmonella paratyphi B (strain ATCC BAA-1250 / SPB7).